We begin with the raw amino-acid sequence, 274 residues long: Lectin-like protein (274 aa).

A signal peptide spans 1–19 (MKIHKLCFLALLLAHTTSA). Positions 28-268 (TSELVFLGDA…RHDIWSWTFQ (241 aa)) are legume-lectin like. The disordered stretch occupies residues 62 to 81 (SHGQSLWSTPVPFKPSSNSS). A glycan (N-linked (GlcNAc...) asparagine) is linked at asparagine 129. Serine 238 carries the post-translational modification Phosphoserine.

Belongs to the leguminous lectin family. In terms of tissue distribution, expressed in seedlings and leaves of adult plants.

It localises to the secreted. It is found in the extracellular space. The protein resides in the apoplast. Its subcellular location is the cell membrane. Its function is as follows. Plays a positive role in the effector-triggered immunity (ETI) response. Involved in salicylic acid (SA)-mediated processes occurring in ETI response, but is not involved in the autophagy process. Promotes systemic rather than local immunity. Essential for systemic acquired resistance (SAR), but not necessary for immune signaling downstream of SA. May act in parallel with SA. The polypeptide is Lectin-like protein (Arabidopsis thaliana (Mouse-ear cress)).